Consider the following 498-residue polypeptide: ATP synthase subunit beta, chloroplastic (498 aa).

An ATP-binding site is contributed by 172–179; that stretch reads GGAGVGKT.

Belongs to the ATPase alpha/beta chains family. F-type ATPases have 2 components, CF(1) - the catalytic core - and CF(0) - the membrane proton channel. CF(1) has five subunits: alpha(3), beta(3), gamma(1), delta(1), epsilon(1). CF(0) has four main subunits: a(1), b(1), b'(1) and c(9-12).

It is found in the plastid. Its subcellular location is the chloroplast thylakoid membrane. It carries out the reaction ATP + H2O + 4 H(+)(in) = ADP + phosphate + 5 H(+)(out). Its function is as follows. Produces ATP from ADP in the presence of a proton gradient across the membrane. The catalytic sites are hosted primarily by the beta subunits. The polypeptide is ATP synthase subunit beta, chloroplastic (Nicotiana tomentosiformis (Tobacco)).